Reading from the N-terminus, the 150-residue chain is Large ribosomal subunit protein uL15 (150 aa).

The tract at residues 1 to 55 (MADNEILQMHDLKPAPGAKKDRTRVGRGEGSKGKTSGRGAKGQTKRNHVRPGFEG) is disordered. The segment covering 8 to 32 (QMHDLKPAPGAKKDRTRVGRGEGSK) has biased composition (basic and acidic residues).

It belongs to the universal ribosomal protein uL15 family. In terms of assembly, part of the 50S ribosomal subunit.

Functionally, binds to the 23S rRNA. In Bifidobacterium longum (strain NCC 2705), this protein is Large ribosomal subunit protein uL15.